The chain runs to 138 residues: Ribosome-binding factor A (138 aa).

This sequence belongs to the RbfA family. In terms of assembly, monomer. Binds 30S ribosomal subunits, but not 50S ribosomal subunits or 70S ribosomes.

The protein localises to the cytoplasm. Functionally, one of several proteins that assist in the late maturation steps of the functional core of the 30S ribosomal subunit. Associates with free 30S ribosomal subunits (but not with 30S subunits that are part of 70S ribosomes or polysomes). Required for efficient processing of 16S rRNA. May interact with the 5'-terminal helix region of 16S rRNA. The polypeptide is Ribosome-binding factor A (Bradyrhizobium sp. (strain BTAi1 / ATCC BAA-1182)).